The following is a 61-amino-acid chain: Small ribosomal subunit protein uS14 (61 aa).

Cys24, Cys27, Cys40, and Cys43 together coordinate Zn(2+).

Belongs to the universal ribosomal protein uS14 family. Zinc-binding uS14 subfamily. As to quaternary structure, part of the 30S ribosomal subunit. Contacts proteins S3 and S10. Requires Zn(2+) as cofactor.

Functionally, binds 16S rRNA, required for the assembly of 30S particles and may also be responsible for determining the conformation of the 16S rRNA at the A site. This Clostridium botulinum (strain 657 / Type Ba4) protein is Small ribosomal subunit protein uS14.